Consider the following 163-residue polypeptide: Probable ribosome biogenesis protein RLP24 (163 aa).

It belongs to the eukaryotic ribosomal protein eL24 family. In terms of assembly, associated with nucleolar and cytoplasmic pre-60S particles. At the end of biogenesis it dissociates from cytoplasmic pre-60S particles and is likely to be exchanged for its ribosomal homolog, RPL24.

The protein resides in the nucleus. It is found in the nucleolus. Functionally, involved in the biogenesis of the 60S ribosomal subunit. Ensures the docking of GTPBP4/NOG1 to pre-60S particles. The sequence is that of Probable ribosome biogenesis protein RLP24 (Rsl24d1) from Mus musculus (Mouse).